Here is a 65-residue protein sequence, read N- to C-terminus: Large ribosomal subunit protein bL32 (65 aa).

The segment covering 1 to 19 (MAVQKSRKTPSKRGMRRSH) has biased composition (basic residues). A disordered region spans residues 1–32 (MAVQKSRKTPSKRGMRRSHNALVKSTLSEDQE).

The protein belongs to the bacterial ribosomal protein bL32 family.

The protein is Large ribosomal subunit protein bL32 of Vesicomyosocius okutanii subsp. Calyptogena okutanii (strain HA).